The following is a 252-amino-acid chain: Aquaporin TIP4-4 (252 aa).

Transmembrane regions (helical) follow at residues 20-40 (AVLAELILTFLFVFAGVGSAM) and 53-73 (VVGLTAVALAHTLVVAVMVSA). Positions 83 to 85 (NPA) match the NPA 1 motif. The next 3 membrane-spanning stretches (helical) occupy residues 105–125 (VAAQLLGSTLACLLLAFLAVA), 143–163 (GVLMEAVLTFSLLFAVYATVV), and 168–188 (AVGGMGPLLVGLVVGANVLAG). The short motif at 197–199 (NPA) is the NPA 2 element. The chain crosses the membrane as a helical span at residues 216 to 236 (VYWVGPLIGGPLAGLVYDGLF).

This sequence belongs to the MIP/aquaporin (TC 1.A.8) family. TIP (TC 1.A.8.10) subfamily.

It localises to the vacuole membrane. Functionally, aquaporins facilitate the transport of water and small neutral solutes across cell membranes. The sequence is that of Aquaporin TIP4-4 (TIP4-4) from Zea mays (Maize).